The following is a 346-amino-acid chain: Phosphate acyltransferase (346 aa).

Belongs to the PlsX family. Homodimer. Probably interacts with PlsY.

Its subcellular location is the cytoplasm. It catalyses the reaction a fatty acyl-[ACP] + phosphate = an acyl phosphate + holo-[ACP]. Its pathway is lipid metabolism; phospholipid metabolism. Functionally, catalyzes the reversible formation of acyl-phosphate (acyl-PO(4)) from acyl-[acyl-carrier-protein] (acyl-ACP). This enzyme utilizes acyl-ACP as fatty acyl donor, but not acyl-CoA. This is Phosphate acyltransferase from Brucella abortus (strain S19).